The primary structure comprises 29 residues: Cyclotide psyleio C (29 aa).

Positions 1-29 (GDLPVCGETCFGGTCNTPGCVCAWPVCTR) form a cross-link, cyclopeptide (Gly-Arg). Cystine bridges form between cysteine 6/cysteine 20, cysteine 10/cysteine 22, and cysteine 15/cysteine 27.

In terms of processing, this is a cyclic peptide.

Its function is as follows. Probably participates in a plant defense mechanism. This chain is Cyclotide psyleio C, found in Psychotria leiocarpa.